A 380-amino-acid chain; its full sequence is Succinyl-diaminopimelate desuccinylase (380 aa).

H71 provides a ligand contact to Zn(2+). The active site involves D73. D104 contributes to the Zn(2+) binding site. The active-site Proton acceptor is E138. The Zn(2+) site is built by E139, E167, and H353.

This sequence belongs to the peptidase M20A family. DapE subfamily. In terms of assembly, homodimer. Zn(2+) serves as cofactor. It depends on Co(2+) as a cofactor.

It catalyses the reaction N-succinyl-(2S,6S)-2,6-diaminopimelate + H2O = (2S,6S)-2,6-diaminopimelate + succinate. The protein operates within amino-acid biosynthesis; L-lysine biosynthesis via DAP pathway; LL-2,6-diaminopimelate from (S)-tetrahydrodipicolinate (succinylase route): step 3/3. Its function is as follows. Catalyzes the hydrolysis of N-succinyl-L,L-diaminopimelic acid (SDAP), forming succinate and LL-2,6-diaminopimelate (DAP), an intermediate involved in the bacterial biosynthesis of lysine and meso-diaminopimelic acid, an essential component of bacterial cell walls. The chain is Succinyl-diaminopimelate desuccinylase from Shewanella baltica (strain OS185).